We begin with the raw amino-acid sequence, 508 residues long: Histidine ammonia-lyase (508 aa).

Positions 141-143 form a cross-link, 5-imidazolinone (Ala-Gly); sequence ASG. 2,3-didehydroalanine (Ser) is present on Ser-142.

This sequence belongs to the PAL/histidase family. In terms of processing, contains an active site 4-methylidene-imidazol-5-one (MIO), which is formed autocatalytically by cyclization and dehydration of residues Ala-Ser-Gly.

It localises to the cytoplasm. The enzyme catalyses L-histidine = trans-urocanate + NH4(+). Its pathway is amino-acid degradation; L-histidine degradation into L-glutamate; N-formimidoyl-L-glutamate from L-histidine: step 1/3. This Bacillus subtilis (strain 168) protein is Histidine ammonia-lyase (hutH).